Consider the following 466-residue polypeptide: ATP synthase subunit beta (466 aa).

Residue 153–160 (GGAGVGKT) participates in ATP binding.

The protein belongs to the ATPase alpha/beta chains family. In terms of assembly, F-type ATPases have 2 components, CF(1) - the catalytic core - and CF(0) - the membrane proton channel. CF(1) has five subunits: alpha(3), beta(3), gamma(1), delta(1), epsilon(1). CF(0) has three main subunits: a(1), b(2) and c(9-12). The alpha and beta chains form an alternating ring which encloses part of the gamma chain. CF(1) is attached to CF(0) by a central stalk formed by the gamma and epsilon chains, while a peripheral stalk is formed by the delta and b chains.

The protein localises to the cell membrane. It catalyses the reaction ATP + H2O + 4 H(+)(in) = ADP + phosphate + 5 H(+)(out). Functionally, produces ATP from ADP in the presence of a proton gradient across the membrane. The catalytic sites are hosted primarily by the beta subunits. This is ATP synthase subunit beta from Clostridium acetobutylicum (strain ATCC 824 / DSM 792 / JCM 1419 / IAM 19013 / LMG 5710 / NBRC 13948 / NRRL B-527 / VKM B-1787 / 2291 / W).